A 414-amino-acid polypeptide reads, in one-letter code: 2,3-diketo-5-methylthiopentyl-1-phosphate enolase (414 aa).

The active-site Proton acceptor is lysine 99. Substrate-binding positions include lysine 148, 174–177 (KDDE), histidine 265, glycine 338, and 360–361 (GG). Positions 174, 176, and 177 each coordinate Mg(2+). Lysine 174 carries the N6-carboxylysine modification.

The protein belongs to the RuBisCO large chain family. Type IV subfamily. As to quaternary structure, homodimer. Mg(2+) serves as cofactor.

It catalyses the reaction 5-methylsulfanyl-2,3-dioxopentyl phosphate = 2-hydroxy-5-methylsulfanyl-3-oxopent-1-enyl phosphate. It participates in amino-acid biosynthesis; L-methionine biosynthesis via salvage pathway; L-methionine from S-methyl-5-thio-alpha-D-ribose 1-phosphate: step 3/6. Catalyzes the enolization of 2,3-diketo-5-methylthiopentyl-1-phosphate (DK-MTP-1-P) into 2-hydroxy-3-keto-5-methylthiopentenyl-1-phosphate (HK-MTPenyl-1-P). In Bacillus cereus (strain B4264), this protein is 2,3-diketo-5-methylthiopentyl-1-phosphate enolase.